We begin with the raw amino-acid sequence, 77 residues long: Translation initiation factor IF-1, chloroplastic (77 aa).

An S1-like domain is found at 1–71 (MKEQKWIHEG…TRGRIIYRLR (71 aa)).

It belongs to the IF-1 family. As to quaternary structure, component of the 30S ribosomal translation pre-initiation complex which assembles on the 30S ribosome in the order IF-2 and IF-3, IF-1 and N-formylmethionyl-tRNA(fMet); mRNA recruitment can occur at any time during PIC assembly.

The protein resides in the plastid. Its subcellular location is the chloroplast. Its function is as follows. One of the essential components for the initiation of protein synthesis. Stabilizes the binding of IF-2 and IF-3 on the 30S subunit to which N-formylmethionyl-tRNA(fMet) subsequently binds. Helps modulate mRNA selection, yielding the 30S pre-initiation complex (PIC). Upon addition of the 50S ribosomal subunit IF-1, IF-2 and IF-3 are released leaving the mature 70S translation initiation complex. In Brexia madagascariensis, this protein is Translation initiation factor IF-1, chloroplastic.